The primary structure comprises 662 residues: Polyunsaturated fatty acid lipoxygenase ALOX15 (662 aa).

The PLAT domain maps to 2-114; the sequence is GLYRIRVSTG…VLSLPEGTGR (113 aa). In terms of domain architecture, Lipoxygenase spans 115–662; it reads TVGDDPQGLF…PSIVENSVAI (548 aa). Residues His360, His365, His540, His544, and Ile662 each contribute to the Fe cation site.

This sequence belongs to the lipoxygenase family. As to quaternary structure, interacts with PEBP1; in response to IL13/interleukin-13, prevents the interaction of PEBP1 with RAF1 to activate the ERK signaling cascade. Fe cation is required as a cofactor.

It localises to the cytoplasm. Its subcellular location is the cytosol. The protein resides in the cell membrane. It is found in the lipid droplet. The enzyme catalyses (5Z,8Z,11Z,14Z)-eicosatetraenoate + O2 = (12S)-hydroperoxy-(5Z,8Z,10E,14Z)-eicosatetraenoate. It catalyses the reaction (9Z,12Z)-octadecadienoate + O2 = (13S)-hydroperoxy-(9Z,11E)-octadecadienoate. The catalysed reaction is (5Z,8Z,11Z,14Z)-eicosatetraenoate + O2 = (15S)-hydroperoxy-(5Z,8Z,11Z,13E)-eicosatetraenoate. It carries out the reaction (5Z,8Z,11Z,14Z)-eicosatetraenoate + 2 O2 = (14R,15S)-dihydroperoxy-(5Z,8Z,10E,12E)-eicosatetraenoate. The enzyme catalyses (5Z,8Z,11Z,14Z)-eicosatetraenoate + 2 O2 = (8S,15S)-dihydroperoxy-(5Z,9E,11Z,13E)-eicosatetraenoate. It catalyses the reaction (14S,15R)-epoxy-(5Z,8Z,11Z)-eicosatrienoate + O2 = (8S)-hydroperoxy-(14S,15R)-epoxy-(5Z,9E,11Z)-eicosatrienoate. The catalysed reaction is (14S,15R)-epoxy-(5Z,8Z,11Z)-eicosatrienoate + O2 = (12S)-hydroperoxy-(14S,15R)-epoxy-(5Z,8Z,10E)-eicosatrienoate. It carries out the reaction (14R,15S)-epoxy-(5Z,8Z,11Z)-eicosatrienoate + O2 = (5S)-hydroperoxy-(14R,15S)-epoxy-(6E,8Z,11Z)-eicosatrienoate. The enzyme catalyses (14R,15S)-epoxy-(5Z,8Z,11Z)-eicosatrienoate + O2 = (12S)-hydroperoxy-(14R,15S)-epoxy-(5Z,8Z,10E)-eicosatrienoate. It catalyses the reaction (15R)-hydroperoxy-(5Z,8Z,11Z,13E)-eicosatetraenoate = 15-oxo-(5Z,8Z,11Z,13E)-eicosatetraenoate + H2O. The catalysed reaction is (15S)-hydroperoxy-(5Z,8Z,11Z,13E)-eicosatetraenoate = (14S,15S)-epoxy-(5Z,8Z,10E,12E)-eicosatetraenoate + H2O. It carries out the reaction (12S)-hydroperoxy-(5Z,8Z,10E,14Z)-eicosatetraenoate = (8S)-hydroxy-(11S,12S)-epoxy-(5Z,9E,14Z)-eicosatrienoate. The enzyme catalyses (4Z,7Z,10Z,13Z,16Z)-docosapentaenoate + O2 = 14-hydroperoxy-(4Z,7Z,10Z,12E,16Z)-docosapentaenoate. It catalyses the reaction (7Z,10Z,13Z,16Z,19Z)-docosapentaenoate + O2 = 14-hydroperoxy-(7Z,10Z,12E,16Z,19Z)-docosapentaenoate. The catalysed reaction is (4Z,7Z,10Z,13Z,16Z,19Z)-docosahexaenoate + O2 = (14S)-hydroperoxy-(4Z,7Z,10Z,12E,16Z,19Z)-docosahexaenoate. It carries out the reaction (4Z,7Z,10Z,13Z,16Z,19Z)-docosahexaenoate + O2 = (17S)-hydroperoxy-(4Z,7Z,10Z,13Z,15E,19Z)-docosahexaenoate. The enzyme catalyses (7S)-hydroperoxy-(4Z,8E,10Z,13Z,16Z,19Z)-docosahexaenoate + O2 = (7S,14S)-dihydroperoxy-(4Z,8E,10Z,12E,16Z,19Z)-docosahexaenoate. It catalyses the reaction (7S)-hydroperoxy-(4Z,8E,10Z,13Z,16Z,19Z)-docosahexaenoate + O2 = (7S,17S)-dihydroperoxy-(4Z,8E,10Z,13Z,15E,19Z)-docosahexaenoate. The catalysed reaction is (4Z,7Z,10Z,13Z,16Z,19Z)-docosahexaenoate + O2 = (11S)-hydroperoxy-(4Z,7Z,9E,13Z,16Z,19Z)-docosahexaenoate. It carries out the reaction N-(5Z,8Z,11Z,14Z)-eicosatetraenoyl-taurine + O2 = N-(12S)-hydroperoxy-(5Z,8Z,10E,14Z)-eicosatetraenoyl-taurine. The enzyme catalyses N-(5Z,8Z,11Z,14Z)-eicosatetraenoyl-gamma-aminobutanoate + O2 = N-(12S)-hydroperoxy-(5Z,8Z,10E,14Z)-eicosatetraenoyl-gamma-aminobutanoate. It catalyses the reaction N-(5Z,8Z,11Z,14Z)-eicosatetraenoyl-glycine + O2 = N-(12S)-hydroperoxy-(5Z,8Z,10E,14Z)-eicosatetraenoyl-glycine. The catalysed reaction is N-(5Z,8Z,11Z,14Z)-eicosatetraenoyl-L-alanine + O2 = N-(12S)-hydroperoxy-(5Z,8Z,10E,14Z)-eicosatetraenoyl-alanine. It carries out the reaction N-(5Z,8Z,11Z,14Z)-eicosatetraenoyl-taurine + O2 = N-(15S)-hydroperoxy-(5Z,8Z,11Z,13E)-eicosatetraenoyl-taurine. The enzyme catalyses N-(5Z,8Z,11Z,14Z)-eicosatetraenoyl-gamma-aminobutanoate + O2 = N-(15S)-hydroperoxy-(5Z,8Z,11Z,13E)-eicosatetraenoyl-gamma-aminobutanoate. It catalyses the reaction N-(5Z,8Z,11Z,14Z)-eicosatetraenoyl-glycine + O2 = N-(15S)-hydroperoxy-(5Z,8Z,11Z,13E)-eicosatetraenoyl-glycine. The catalysed reaction is N-(5Z,8Z,11Z,14Z)-eicosatetraenoyl-L-alanine + O2 = N-(15S)-hydroperoxy-(5Z,8Z,11Z,13E)-eicosatetraenoyl-alanine. The protein operates within lipid metabolism; hydroperoxy eicosatetraenoic acid biosynthesis. Functionally, non-heme iron-containing dioxygenase that catalyzes the stereo-specific peroxidation of free and esterified polyunsaturated fatty acids generating a spectrum of bioactive lipid mediators. It inserts peroxyl groups at C12 or C15 of arachidonate ((5Z,8Z,11Z,14Z)-eicosatetraenoate) producing both 12-hydroperoxyeicosatetraenoate/12-HPETE and 15-hydroperoxyeicosatetraenoate/15-HPETE. It may then act on 12-HPETE to produce hepoxilins, which may show pro-inflammatory properties. Can also peroxidize linoleate ((9Z,12Z)-octadecadienoate) to 13-hydroperoxyoctadecadienoate. May participate in the sequential oxidations of DHA ((4Z,7Z,10Z,13Z,16Z,19Z)-docosahexaenoate) to generate specialized pro-resolving mediators (SPMs)like resolvin D5 ((7S,17S)-diHPDHA) and (7S,14S)-diHPDHA, that actively down-regulate the immune response and have anti-aggregation properties with platelets. Can convert epoxy fatty acids to hydroperoxy-epoxides derivatives followed by an intramolecular nucleophilic substitution leading to the formation of monocyclic endoperoxides. Plays an important role during the maintenance of self-tolerance by peroxidizing membrane-bound phosphatidylethanolamine which can then signal the sorting process for clearance of apoptotic cells during inflammation and prevent an autoimmune response. In addition to its role in the immune and inflammatory responses, this enzyme may play a role in epithelial wound healing in the cornea through production of lipoxin A4 (LXA(4)) and docosahexaenoic acid-derived neuroprotectin D1 (NPD1; 10R,17S-HDHA), both lipid autacoids exhibit anti-inflammatory and neuroprotective properties. Furthermore, it may regulate actin polymerization which is crucial for several biological processes such as the phagocytosis of apoptotic cells. It is also implicated in the generation of endogenous ligands for peroxisome proliferator activated receptor (PPAR-gamma), hence modulating macrophage development and function. It may also exert a negative effect on skeletal development by regulating bone mass through this pathway. As well as participates in ER stress and downstream inflammation in adipocytes, pancreatic islets, and liver. Finally, it is also involved in the cellular response to IL13/interleukin-13. The polypeptide is Polyunsaturated fatty acid lipoxygenase ALOX15 (Pongo abelii (Sumatran orangutan)).